We begin with the raw amino-acid sequence, 378 residues long: Putative monoglyceride lipase (378 aa).

The GXSXG signature appears at 97-101 (GHSMG). Residue serine 99 is the Nucleophile of the active site. Active-site charge relay system residues include aspartate 219 and histidine 249. Residues 276 to 292 (PSETVKSEQETAVEHPK) are compositionally biased toward basic and acidic residues. The segment at 276–350 (PSETVKSEQE…TSESTTVPET (75 aa)) is disordered. The span at 293–305 (PTATTSAPSASPT) shows a compositional bias: low complexity. Serine 301 carries the post-translational modification Phosphoserine. The span at 341–350 (TSESTTVPET) shows a compositional bias: polar residues.

The protein belongs to the AB hydrolase superfamily. Monoacylglycerol lipase family.

The protein resides in the lipid droplet. Its subcellular location is the cytoplasm. It is found in the endoplasmic reticulum. The protein localises to the mitochondrion outer membrane. The enzyme catalyses Hydrolyzes glycerol monoesters of long-chain fatty acids.. It participates in glycerolipid metabolism; triacylglycerol degradation. Converts monoacylglycerides (MAG) to free fatty acids and glycerol. Has a strong preference for monounsaturated monoglycerides. Required for efficient degradation of MAG, short-lived intermediates of glycerolipid metabolism which may also function as lipid signaling molecules. Controls inactivation of the signaling lipid N-palmitoylethanolamine (PEA). Involved in fatty acid ethyl ester (FAEE) catabolism. FAEEs are non-oxidative metabolites of ethanol that are transiently incorporated into lipid droplets (LDs). Their mobilization by LD-resident FAEE hydrolases facilitates a controlled metabolism of these potentially toxic lipid metabolites. In Schizosaccharomyces pombe (strain 972 / ATCC 24843) (Fission yeast), this protein is Putative monoglyceride lipase (mgl1).